A 34-amino-acid polypeptide reads, in one-letter code: ACLGQWDSCDPKASKCCPNYACEWKYPWCRYKLF.

3 disulfide bridges follow: C2-C17, C9-C22, and C16-C29. The residue at position 34 (F34) is a Phenylalanine amide.

This sequence belongs to the neurotoxin 10 (Hwtx-1) family. Expressed by the venom gland.

Its subcellular location is the secreted. In terms of biological role, voltage-gated sodium channel inhibitor. It is unclear if it selectively inhibits Nav1.7/SCN9A or shows similar potency on all sodium channels tested. According to Escoubas et al., 2006 and Nicolas et al., 2019, it is selective over Nav1.7/SCN9A (90% inhibition at 1 uM), versus Nav1.4 and Nav1.6 (35% inhibition), and shows a small inhibition on all other sodium channels (except Nav1.8/SCN10A). According to Goncalves et al., 2019, it shows a similar inhibition on almost all sodium channels tested (Nav1.1/SCN1A (IC(50)=280.3 nM), Nav1.2/SCN2A (IC(50)=73.7 nM), Nav1.3/SCN3A (IC(50)=201.5 nM), Nav1.4/SCN4A (IC(50)&gt;2100 nM), Nav1.5/SCN5A (IC(50)=710.6 nM), Nav1.6/SCN8A (IC(50)=491.2 nM), and Nav1.7/SCN9A (IC(50)=254.3-260 nM)), except Nav1.8/SCN10A. The voltage-dependence of steady-state Nav1.7/SCN9A channel activation and inactivation are not affected, suggesting that is does not act as a gating-modifier toxin but rather blocks or impedes ion flux through the channel pore. The toxin effect is partial and poorly reversible. In addition to its inhibition to sodium channels, it also shows a small inhibition on rat Kv3.4/KCNC4 potassium channels (20% inhibition at 1 uM). In vivo, when tested on pain models, it shows analgesic activity. The polypeptide is Mu-theraphotoxin-Pspp1 (Phlogiellus sp. (Tarantula)).